The chain runs to 958 residues: Glucoamylase 1 (958 aa).

An N-terminal signal peptide occupies residues 1-22 (MIFLKLIKSIVIGLGLVSAIQA). N-linked (GlcNAc...) asparagine glycans are attached at residues asparagine 61, asparagine 78, asparagine 107, asparagine 197, asparagine 403, and asparagine 416. Catalysis depends on residues aspartate 470 and glutamate 473. N-linked (GlcNAc...) asparagine glycosylation is found at asparagine 513, asparagine 580, and asparagine 602. The active-site Proton donor is aspartate 638. N-linked (GlcNAc...) asparagine glycosylation is found at asparagine 813 and asparagine 907.

This sequence belongs to the glycosyl hydrolase 31 family.

The enzyme catalyses Hydrolysis of terminal (1-&gt;4)-linked alpha-D-glucose residues successively from non-reducing ends of the chains with release of beta-D-glucose.. Functionally, this glucoamylase has a specificity toward both alpha-1,4 and alpha-1,6 linkages. The protein is Glucoamylase 1 (GAM1) of Schwanniomyces occidentalis (Yeast).